The chain runs to 456 residues: Protein odr-4 homolog (456 aa).

Positions 374–401 (IESSKNNNNNNNNNNNNNNNNNNNNSKL) are enriched in low complexity. The disordered stretch occupies residues 374-403 (IESSKNNNNNNNNNNNNNNNNNNNNSKLSN). A helical transmembrane segment spans residues 436 to 456 (YLIIIISVLVLMVAFYFKFFV).

This sequence belongs to the ODR-4 family.

Its subcellular location is the membrane. Its function is as follows. May play a role in the trafficking of a subset of G-protein coupled receptors. The protein is Protein odr-4 homolog of Dictyostelium discoideum (Social amoeba).